We begin with the raw amino-acid sequence, 377 residues long: Succinyl-diaminopimelate desuccinylase (377 aa).

His-68 serves as a coordination point for Zn(2+). Asp-70 is a catalytic residue. Residue Asp-101 participates in Zn(2+) binding. Catalysis depends on Glu-135, which acts as the Proton acceptor. Zn(2+)-binding residues include Glu-136, Glu-164, and His-350.

This sequence belongs to the peptidase M20A family. DapE subfamily. As to quaternary structure, homodimer. Zn(2+) serves as cofactor. It depends on Co(2+) as a cofactor.

The enzyme catalyses N-succinyl-(2S,6S)-2,6-diaminopimelate + H2O = (2S,6S)-2,6-diaminopimelate + succinate. Its pathway is amino-acid biosynthesis; L-lysine biosynthesis via DAP pathway; LL-2,6-diaminopimelate from (S)-tetrahydrodipicolinate (succinylase route): step 3/3. Functionally, catalyzes the hydrolysis of N-succinyl-L,L-diaminopimelic acid (SDAP), forming succinate and LL-2,6-diaminopimelate (DAP), an intermediate involved in the bacterial biosynthesis of lysine and meso-diaminopimelic acid, an essential component of bacterial cell walls. The chain is Succinyl-diaminopimelate desuccinylase from Acinetobacter baumannii (strain AB307-0294).